A 311-amino-acid chain; its full sequence is MGEKVVVLIGPTAVGKTKMSIQLAKRLNGEIINGDSMQVYKGLDIGTAKIRQEETEGIPHHLLDIKEPHESFSVAEFQTLARSLIKDITKRGKLPIIVGGTGLYIQSVIYDYQFSDAPSNDLYRQSLERCSPDELYEQLKQIDPLSAERIHPNNVRRVIRALEIYHCTGKTMTEWLKEQKRQLVYNVALIGLTMEREKLYARINQRVDQMIDQGLIEEVKRLYEQGLRDCQAIQAIGYKELYAYFDGMLTLKEAIEQLKQNSRRYAKRQFTWFRNQMPVQWFDMTDDTIFERRVNEILHYIEGKFHFQSNM.

10–17 (GPTAVGKT) contributes to the ATP binding site. Residue 12-17 (TAVGKT) coordinates substrate. Positions 35 to 38 (DSMQ) are interaction with substrate tRNA.

Belongs to the IPP transferase family. In terms of assembly, monomer. Mg(2+) serves as cofactor.

It carries out the reaction adenosine(37) in tRNA + dimethylallyl diphosphate = N(6)-dimethylallyladenosine(37) in tRNA + diphosphate. In terms of biological role, catalyzes the transfer of a dimethylallyl group onto the adenine at position 37 in tRNAs that read codons beginning with uridine, leading to the formation of N6-(dimethylallyl)adenosine (i(6)A). The chain is tRNA dimethylallyltransferase from Anoxybacillus flavithermus (strain DSM 21510 / WK1).